The primary structure comprises 246 residues: ATP synthase subunit a, chloroplastic (246 aa).

Helical transmembrane passes span 35–55 (GQVFIVSWLVIAALIGFALVG), 94–114 (VPYIATVFLFIFGANWAGALI), 133–153 (INVTVALALLTSLSYFYAGLS), and 202–222 (VFALLVPILIPLPVMTLGLFA).

The protein belongs to the ATPase A chain family. F-type ATPases have 2 components, CF(1) - the catalytic core - and CF(0) - the membrane proton channel. CF(1) has five subunits: alpha(3), beta(3), gamma(1), delta(1), epsilon(1). CF(0) has four main subunits: a, b, b' and c.

Its subcellular location is the plastid. The protein resides in the chloroplast thylakoid membrane. Functionally, key component of the proton channel; it plays a direct role in the translocation of protons across the membrane. In Rhodomonas salina (Cryptomonas salina), this protein is ATP synthase subunit a, chloroplastic.